A 408-amino-acid chain; its full sequence is MKILVLNAGSSSQKSCLYEIQSEPSSQPPSPLWEGKVDWTHEQGYAEIEVKTSTGACLQEKIAADSRPIVISHLLATLWQGDTQVIDQPNEIAVVGHRVVHGGAEYRKSVFITAEVKAAIARLASFAPVHNPANLEGIEAVETLFGNIPQVAVFDTAFHAHLPLAAAIYPGPYEWYEQGIRRYGFHGISHRYCAERAAQLLDRDLSSLRLITCHLGNGCSLAAIQNGISIETTMGFTPMEGLMMGSRSGSIDPGILIHLLRHQGYSADKLDQVLNKQSGLLGVSGISADLRRIDQAIAAGNDRAKLALEIYIHRLQSAIGACLPHLGGLDALIFTAGVGENSATVRAATCAGFEYLNWQIDQDQNQPSAQDRDIATPDSAVRILVIHTQEDWAIAQDCWQLIQTNSQS.

Asn-7 contacts Mg(2+). Lys-14 contacts ATP. Substrate is bound at residue Arg-98. Residue Asp-155 is the Proton donor/acceptor of the active site. ATP-binding positions include 214-218 (HLGNG), 289-291 (DLR), and 337-341 (GVGEN). Glu-390 contacts Mg(2+).

Belongs to the acetokinase family. Homodimer. Mg(2+) serves as cofactor. Requires Mn(2+) as cofactor.

The protein localises to the cytoplasm. The enzyme catalyses acetate + ATP = acetyl phosphate + ADP. It participates in metabolic intermediate biosynthesis; acetyl-CoA biosynthesis; acetyl-CoA from acetate: step 1/2. Catalyzes the formation of acetyl phosphate from acetate and ATP. Can also catalyze the reverse reaction. The sequence is that of Acetate kinase from Cyanothece sp. (strain PCC 7425 / ATCC 29141).